The primary structure comprises 261 residues: Cytochrome c oxidase subunit 3 (261 aa).

Topologically, residues M1 to P15 are mitochondrial matrix. A helical transmembrane segment spans residues W16–M33. Residues W34 to N38 lie on the Mitochondrial intermembrane side of the membrane. The helical transmembrane segment at S39 to I62 threads the bilayer. The Mitochondrial matrix portion of the chain corresponds to R63 to K77. The chain crosses the membrane as a helical span at residues G78 to W99. The Mitochondrial intermembrane segment spans residues A100–V129. A helical transmembrane segment spans residues P130–S150. The Mitochondrial matrix portion of the chain corresponds to L151–R156. A helical membrane pass occupies residues N157–A178. Topologically, residues S179–F198 are mitochondrial intermembrane. The helical transmembrane segment at M199–K224 threads the bilayer. Topologically, residues F225–H232 are mitochondrial matrix. A helical transmembrane segment spans residues F233 to S255. Residues I256–S261 lie on the Mitochondrial intermembrane side of the membrane.

This sequence belongs to the cytochrome c oxidase subunit 3 family. As to quaternary structure, component of the cytochrome c oxidase (complex IV, CIV), a multisubunit enzyme composed of 14 subunits. The complex is composed of a catalytic core of 3 subunits MT-CO1, MT-CO2 and MT-CO3, encoded in the mitochondrial DNA, and 11 supernumerary subunits COX4I, COX5A, COX5B, COX6A, COX6B, COX6C, COX7A, COX7B, COX7C, COX8 and NDUFA4, which are encoded in the nuclear genome. The complex exists as a monomer or a dimer and forms supercomplexes (SCs) in the inner mitochondrial membrane with NADH-ubiquinone oxidoreductase (complex I, CI) and ubiquinol-cytochrome c oxidoreductase (cytochrome b-c1 complex, complex III, CIII), resulting in different assemblies (supercomplex SCI(1)III(2)IV(1) and megacomplex MCI(2)III(2)IV(2)).

Its subcellular location is the mitochondrion inner membrane. The catalysed reaction is 4 Fe(II)-[cytochrome c] + O2 + 8 H(+)(in) = 4 Fe(III)-[cytochrome c] + 2 H2O + 4 H(+)(out). Its function is as follows. Component of the cytochrome c oxidase, the last enzyme in the mitochondrial electron transport chain which drives oxidative phosphorylation. The respiratory chain contains 3 multisubunit complexes succinate dehydrogenase (complex II, CII), ubiquinol-cytochrome c oxidoreductase (cytochrome b-c1 complex, complex III, CIII) and cytochrome c oxidase (complex IV, CIV), that cooperate to transfer electrons derived from NADH and succinate to molecular oxygen, creating an electrochemical gradient over the inner membrane that drives transmembrane transport and the ATP synthase. Cytochrome c oxidase is the component of the respiratory chain that catalyzes the reduction of oxygen to water. Electrons originating from reduced cytochrome c in the intermembrane space (IMS) are transferred via the dinuclear copper A center (CU(A)) of subunit 2 and heme A of subunit 1 to the active site in subunit 1, a binuclear center (BNC) formed by heme A3 and copper B (CU(B)). The BNC reduces molecular oxygen to 2 water molecules using 4 electrons from cytochrome c in the IMS and 4 protons from the mitochondrial matrix. This is Cytochrome c oxidase subunit 3 (mt-Co3) from Mus musculus (Mouse).